The sequence spans 273 residues: 3-methyl-2-oxobutanoate hydroxymethyltransferase (273 aa).

D53 and D92 together coordinate Mg(2+). Residues D53–S54, D92, and K120 each bind 3-methyl-2-oxobutanoate. E122 contacts Mg(2+). Residue E189 is the Proton acceptor of the active site.

It belongs to the PanB family. As to quaternary structure, homodecamer; pentamer of dimers. The cofactor is Mg(2+).

The protein resides in the cytoplasm. The catalysed reaction is 3-methyl-2-oxobutanoate + (6R)-5,10-methylene-5,6,7,8-tetrahydrofolate + H2O = 2-dehydropantoate + (6S)-5,6,7,8-tetrahydrofolate. It functions in the pathway cofactor biosynthesis; (R)-pantothenate biosynthesis; (R)-pantoate from 3-methyl-2-oxobutanoate: step 1/2. Functionally, catalyzes the reversible reaction in which hydroxymethyl group from 5,10-methylenetetrahydrofolate is transferred onto alpha-ketoisovalerate to form ketopantoate. The chain is 3-methyl-2-oxobutanoate hydroxymethyltransferase from Cupriavidus necator (strain ATCC 17699 / DSM 428 / KCTC 22496 / NCIMB 10442 / H16 / Stanier 337) (Ralstonia eutropha).